The chain runs to 390 residues: Lissencephaly-1 homolog (390 aa).

In terms of domain architecture, LisH spans 7 to 39; sequence QREEINRAVAEYLQNNGYSEAFNMLLKEASLSE. A coiled-coil region spans residues 54-80; it reads TTVLRLQRKVNDLEAKLLESQQEINHG. WD repeat units lie at residues 104 to 145, 146 to 185, 189 to 228, 231 to 270, 272 to 313, 316 to 355, and 358 to 390; these read GHRL…KTLK, GHTD…DCLK, GHEH…CVFT, GHND…RNWY, EIMS…VIFT, AHEN…CMKA, and AHEH…WECR.

It belongs to the WD repeat LIS1/nudF family.

The protein localises to the cytoplasm. Its subcellular location is the cytoskeleton. The protein resides in the microtubule organizing center. It localises to the centrosome. Its function is as follows. Positively regulates the activity of the minus-end directed microtubule motor protein dynein. May enhance dynein-mediated microtubule sliding by targeting dynein to the microtubule plus end. Required for several dynein- and microtubule-dependent processes. In Caenorhabditis briggsae, this protein is Lissencephaly-1 homolog.